The chain runs to 350 residues: Zinc finger protein 367 (350 aa).

The tract at residues 104-151 (SGLRGRGAPPPAASASAAASGGEDEEEASSPDSGHLKDGIRRGRPRAD) is disordered. The segment covering 137-151 (GHLKDGIRRGRPRAD) has biased composition (basic and acidic residues). C2H2-type zinc fingers lie at residues 167 to 189 (IRCNICNRVFPREKSLQAHKRTH) and 195 to 219 (YLCDYPDCGKAFVQSGQLKTHQRLH). Residues 290–327 (KGKLVQKADQEQQDPLEYLQSDEEDDEKRGAQRRLQEQ) form a disordered region. Positions 308–342 (LQSDEEDDEKRGAQRRLQEQRERLHGALALIELAN) form a coiled coil. Residue serine 310 is modified to Phosphoserine. The span at 316–327 (EKRGAQRRLQEQ) shows a compositional bias: basic and acidic residues.

This sequence belongs to the krueppel C2H2-type zinc-finger protein family.

The protein resides in the nucleus. In terms of biological role, transcriptional activator. Isoform 1 may be involved in transcriptional activation of erythroid genes. The protein is Zinc finger protein 367 (ZNF367) of Homo sapiens (Human).